Reading from the N-terminus, the 153-residue chain is Deoxyuridine 5'-triphosphate nucleotidohydrolase (153 aa).

Residues 71–73 (RSG), N84, 88–90 (TID), and K98 each bind substrate.

This sequence belongs to the dUTPase family. It depends on Mg(2+) as a cofactor.

The enzyme catalyses dUTP + H2O = dUMP + diphosphate + H(+). It participates in pyrimidine metabolism; dUMP biosynthesis; dUMP from dCTP (dUTP route): step 2/2. This enzyme is involved in nucleotide metabolism: it produces dUMP, the immediate precursor of thymidine nucleotides and it decreases the intracellular concentration of dUTP so that uracil cannot be incorporated into DNA. This is Deoxyuridine 5'-triphosphate nucleotidohydrolase from Wolbachia sp. subsp. Drosophila simulans (strain wRi).